A 167-amino-acid chain; its full sequence is Ribosome maturation factor RimM (167 aa).

In terms of domain architecture, PRC barrel spans 94–166; sequence TGRAYLHELI…YMVVPRFDEF (73 aa).

Belongs to the RimM family. As to quaternary structure, binds ribosomal protein uS19.

It is found in the cytoplasm. Functionally, an accessory protein needed during the final step in the assembly of 30S ribosomal subunit, possibly for assembly of the head region. Essential for efficient processing of 16S rRNA. May be needed both before and after RbfA during the maturation of 16S rRNA. It has affinity for free ribosomal 30S subunits but not for 70S ribosomes. The protein is Ribosome maturation factor RimM of Chlorobium phaeobacteroides (strain DSM 266 / SMG 266 / 2430).